The chain runs to 412 residues: Putative competence-damage inducible protein (412 aa).

This sequence belongs to the CinA family.

The sequence is that of Putative competence-damage inducible protein from Bacillus cereus (strain AH820).